The following is a 284-amino-acid chain: UPF0276 protein Ping_0944 (284 aa).

This sequence belongs to the UPF0276 family.

This Psychromonas ingrahamii (strain DSM 17664 / CCUG 51855 / 37) protein is UPF0276 protein Ping_0944.